Reading from the N-terminus, the 292-residue chain is D-alanyl-D-alanine endopeptidase (292 aa).

The signal sequence occupies residues 1–18 (MFKKALFILSLCPSFALA). The Acyl-ester intermediate role is filled by Ser45. Lys48 (proton acceptor) is an active-site residue. Ser102 is an active-site residue. Residue Lys207 participates in substrate binding.

Belongs to the peptidase S11 family.

It is found in the periplasm. Cell wall formation. May play a specialized role in remodeling the cell wall. Specifically hydrolyzes the DD-diaminopimelate-alanine bonds in high-molecular-mass murein sacculi. The polypeptide is D-alanyl-D-alanine endopeptidase (pbpG) (Haemophilus influenzae (strain ATCC 51907 / DSM 11121 / KW20 / Rd)).